A 303-amino-acid chain; its full sequence is Signal recognition particle receptor FtsY (303 aa).

GTP-binding positions include 108–115, 190–194, and 254–257; these read GVNGVGKT, DTAGR, and TKLD.

Belongs to the GTP-binding SRP family. FtsY subfamily. Part of the signal recognition particle protein translocation system, which is composed of SRP and FtsY. SRP is a ribonucleoprotein composed of Ffh and a 4.5S RNA molecule.

The protein resides in the cell inner membrane. The protein localises to the cytoplasm. The catalysed reaction is GTP + H2O = GDP + phosphate + H(+). Involved in targeting and insertion of nascent membrane proteins into the cytoplasmic membrane. Acts as a receptor for the complex formed by the signal recognition particle (SRP) and the ribosome-nascent chain (RNC). Interaction with SRP-RNC leads to the transfer of the RNC complex to the Sec translocase for insertion into the membrane, the hydrolysis of GTP by both Ffh and FtsY, and the dissociation of the SRP-FtsY complex into the individual components. This chain is Signal recognition particle receptor FtsY, found in Rickettsia typhi (strain ATCC VR-144 / Wilmington).